The primary structure comprises 625 residues: tRNA uridine 5-carboxymethylaminomethyl modification enzyme MnmG (625 aa).

FAD contacts are provided by residues 11–16 (GAGHAG), Val123, and Ser178. 271-285 (GPRYCPSIETKIVTF) serves as a coordination point for NAD(+). Gln368 contacts FAD.

The protein belongs to the MnmG family. Homodimer. Heterotetramer of two MnmE and two MnmG subunits. It depends on FAD as a cofactor.

It localises to the cytoplasm. Its function is as follows. NAD-binding protein involved in the addition of a carboxymethylaminomethyl (cmnm) group at the wobble position (U34) of certain tRNAs, forming tRNA-cmnm(5)s(2)U34. This Bacteroides fragilis (strain ATCC 25285 / DSM 2151 / CCUG 4856 / JCM 11019 / LMG 10263 / NCTC 9343 / Onslow / VPI 2553 / EN-2) protein is tRNA uridine 5-carboxymethylaminomethyl modification enzyme MnmG.